A 195-amino-acid polypeptide reads, in one-letter code: Glycerol-3-phosphate acyltransferase (195 aa).

Transmembrane regions (helical) follow at residues 3 to 23 (EAALLVLCYLLGSIPFSYFFT), 51 to 71 (GVALLAFLGDLLKGLLAAWIG), 79 to 99 (LLVICVILAVIGHIYPVFLGF), 111 to 131 (IILFLMPDVTGILLLIFLAIV), and 153 to 173 (LAMGKPWSYVVIGILMAALVV).

This sequence belongs to the PlsY family. In terms of assembly, probably interacts with PlsX.

It is found in the cell membrane. It catalyses the reaction an acyl phosphate + sn-glycerol 3-phosphate = a 1-acyl-sn-glycero-3-phosphate + phosphate. It participates in lipid metabolism; phospholipid metabolism. Catalyzes the transfer of an acyl group from acyl-phosphate (acyl-PO(4)) to glycerol-3-phosphate (G3P) to form lysophosphatidic acid (LPA). This enzyme utilizes acyl-phosphate as fatty acyl donor, but not acyl-CoA or acyl-ACP. In Syntrophomonas wolfei subsp. wolfei (strain DSM 2245B / Goettingen), this protein is Glycerol-3-phosphate acyltransferase.